The primary structure comprises 310 residues: Methionyl-tRNA formyltransferase (310 aa).

109–112 (SLLP) contributes to the (6S)-5,6,7,8-tetrahydrofolate binding site.

Belongs to the Fmt family.

The enzyme catalyses L-methionyl-tRNA(fMet) + (6R)-10-formyltetrahydrofolate = N-formyl-L-methionyl-tRNA(fMet) + (6S)-5,6,7,8-tetrahydrofolate + H(+). Functionally, attaches a formyl group to the free amino group of methionyl-tRNA(fMet). The formyl group appears to play a dual role in the initiator identity of N-formylmethionyl-tRNA by promoting its recognition by IF2 and preventing the misappropriation of this tRNA by the elongation apparatus. This is Methionyl-tRNA formyltransferase from Staphylococcus epidermidis (strain ATCC 35984 / DSM 28319 / BCRC 17069 / CCUG 31568 / BM 3577 / RP62A).